Consider the following 196-residue polypeptide: Corticoliberin (196 aa).

The signal sequence occupies residues 1–24; that stretch reads MRLPLLVSAGVLLVALLPCPPCRA. The propeptide occupies 25–153; the sequence is LLSRGPVPGA…HQEAPERERR (129 aa). Disordered regions lie at residues 32–61, 85–105, and 136–158; these read PGARQAPQHPQPLDFFQPPPQSEQPQQPQA, APLSPASSLLAGGSGSRPSPE, and GARNALGGHQEAPERERRSEEPP. 2 stretches are compositionally biased toward low complexity: residues 38 to 47 and 85 to 104; these read PQHPQPLDFF and APLSPASSLLAGGSGSRPSP. The segment covering 146–156 has biased composition (basic and acidic residues); that stretch reads EAPERERRSEE. I194 is subject to Isoleucine amide.

This sequence belongs to the sauvagine/corticotropin-releasing factor/urotensin I family. Interacts (via C-terminus) with CRFR1 (via N-terminal extracellular domain). Produced by the hypothalamus and placenta.

Its subcellular location is the secreted. In terms of biological role, hormone regulating the release of corticotropin from pituitary gland. Induces NLRP6 in intestinal epithelial cells, hence may influence gut microbiota profile. This chain is Corticoliberin (CRH), found in Homo sapiens (Human).